The primary structure comprises 740 residues: Catalase-peroxidase (740 aa).

Residues Met-1–Ser-14 show a composition bias toward basic and acidic residues. A disordered region spans residues Met-1–Pro-21. A cross-link (tryptophyl-tyrosyl-methioninium (Trp-Tyr) (with M-257)) is located at residues Trp-108–Tyr-231. His-109 serves as the catalytic Proton acceptor. The segment at residues Tyr-231–Met-257 is a cross-link (tryptophyl-tyrosyl-methioninium (Tyr-Met) (with W-108)). His-272 serves as a coordination point for heme b.

It belongs to the peroxidase family. Peroxidase/catalase subfamily. As to quaternary structure, homodimer. Heme b serves as cofactor. Post-translationally, formation of the three residue Trp-Tyr-Met cross-link is important for the catalase, but not the peroxidase activity of the enzyme.

The catalysed reaction is H2O2 + AH2 = A + 2 H2O. The enzyme catalyses 2 H2O2 = O2 + 2 H2O. Bifunctional enzyme with both catalase and broad-spectrum peroxidase activity. The polypeptide is Catalase-peroxidase (Streptomyces reticuli).